A 140-amino-acid polypeptide reads, in one-letter code: Organic hydroperoxide resistance protein-like (140 aa).

This sequence belongs to the OsmC/Ohr family.

In Staphylococcus aureus (strain MSSA476), this protein is Organic hydroperoxide resistance protein-like.